Consider the following 523-residue polypeptide: Leghemoglobin reductase (523 aa).

Residues M1–F30 constitute a mitochondrion transit peptide. FAD-binding positions include E66 to C75, K84, G148, and T177 to S179. The cysteines at positions 75 and 80 are disulfide-linked. Residues G214 to E221, E237, V271, and G306 contribute to the NAD(+) site. FAD contacts are provided by residues D347 and M353–H356. The Proton acceptor role is filled by H479.

It belongs to the class-I pyridine nucleotide-disulfide oxidoreductase family. In terms of assembly, homodimer. Requires FAD as cofactor.

Its subcellular location is the mitochondrion. It catalyses the reaction 2 Fe(III)-[leghemoglobin] + NADH = 2 Fe(II)-[leghemoglobin] + NAD(+) + H(+). The catalysed reaction is 2 Fe(III)-[leghemoglobin] + NADPH = 2 Fe(II)-[leghemoglobin] + NADP(+) + H(+). In terms of biological role, reduces ferric leghemoglobin (Lb) to ferrous Lb. The protein is Leghemoglobin reductase (FLBR) of Vigna unguiculata (Cowpea).